The primary structure comprises 473 residues: Ribulose bisphosphate carboxylase large chain (473 aa).

Substrate is bound by residues Asn-116 and Thr-166. The active-site Proton acceptor is Lys-168. Lys-170 is a binding site for substrate. Mg(2+)-binding residues include Lys-194, Asp-196, and Glu-197. N6-carboxylysine is present on Lys-194. His-287 serves as the catalytic Proton acceptor. 3 residues coordinate substrate: Arg-288, His-320, and Ser-372.

This sequence belongs to the RuBisCO large chain family. Type I subfamily. As to quaternary structure, heterohexadecamer of 8 large chains and 8 small chains. The cofactor is Mg(2+).

It catalyses the reaction 2 (2R)-3-phosphoglycerate + 2 H(+) = D-ribulose 1,5-bisphosphate + CO2 + H2O. The enzyme catalyses D-ribulose 1,5-bisphosphate + O2 = 2-phosphoglycolate + (2R)-3-phosphoglycerate + 2 H(+). Functionally, ruBisCO catalyzes two reactions: the carboxylation of D-ribulose 1,5-bisphosphate, the primary event in carbon dioxide fixation, as well as the oxidative fragmentation of the pentose substrate. Both reactions occur simultaneously and in competition at the same active site. The chain is Ribulose bisphosphate carboxylase large chain from Hydrogenophaga pseudoflava (Pseudomonas carboxydoflava).